The primary structure comprises 490 residues: Bifunctional dihydrocamalexate synthase/camalexin synthase (490 aa).

A helical transmembrane segment spans residues 1–21 (MSVFLCFLVLLPLILIFLNVL).

It belongs to the cytochrome P450 family.

It is found in the membrane. The enzyme catalyses 2-(L-cystein-S-yl)-2-(1H-indol-3-yl)-acetonitrile + 2 reduced [NADPH--hemoprotein reductase] + 2 O2 = camalexin + hydrogen cyanide + 2 oxidized [NADPH--hemoprotein reductase] + CO2 + 4 H2O + 2 H(+). The catalysed reaction is 2-(L-cystein-S-yl)-2-(1H-indol-3-yl)-acetonitrile + reduced [NADPH--hemoprotein reductase] + O2 = (R)-dihydrocamalexate + hydrogen cyanide + oxidized [NADPH--hemoprotein reductase] + 2 H2O + 2 H(+). It catalyses the reaction (R)-dihydrocamalexate + reduced [NADPH--hemoprotein reductase] + O2 = camalexin + oxidized [NADPH--hemoprotein reductase] + CO2 + 2 H2O. Functionally, multifunctional enzyme involved in the biosynthesis of the indole-derived phytoalexin camalexin. Catalyzes two reactions, the formation of dihydrocamalexate from indole-3-acetonitrile-cysteine conjugate and the oxidative decarboxylation of dihydrocamalexate which is the final step in camalexin biosynthesis. Required for the resistance to the fungal pathogens A.brassicicola, B.cinerea, B.elliptica, B.tulipae, L.maculans and Colletotrichum higginsianum. Seems not to be required for resistance to P.syringae, P.porri, and not involved in age-related resistance. This is Bifunctional dihydrocamalexate synthase/camalexin synthase (CYP71B15) from Arabidopsis thaliana (Mouse-ear cress).